The chain runs to 116 residues: Large ribosomal subunit protein uL24c (116 aa).

The protein belongs to the universal ribosomal protein uL24 family. As to quaternary structure, part of the 50S ribosomal subunit.

It is found in the plastid. Its subcellular location is the chloroplast. In terms of biological role, one of two assembly initiator proteins, it binds directly to the 5'-end of the 23S rRNA, where it nucleates assembly of the 50S subunit. The chain is Large ribosomal subunit protein uL24c (rpl24) from Pyropia yezoensis (Susabi-nori).